We begin with the raw amino-acid sequence, 2451 residues long: MGSITHEPKYTNEPIAIVGSSCRFPGDATSPSKLWDLLKNPRDVVSEIPSTRFNTTGFYHPDSQNHGAHPRAFDRDFFGISPKEAQSMDPQQRMLLETVYEGIESAGYSMQQLRGSNTAVFVGVMFLDYQLISARGLDSLPQYHATGVAMSILANRLSYFYDWKGPSVGIDTACSSSLVALHYAVQTLRSGEAKMAVAAGSNLILVPDLFVSESSLNMLSPNGRSYMWDKDADGYTRGEGTSAVILKTLSQAISDGDHIECIIRETGVNQDGQTPGITMPSPTAQAELIRSTYAKAGLDLRLECDRPQYFEAHGTGTQAGDPREAEAISTVFFPKGSIYDRKLTVGSVKTLIGHLEGSAGLAGVLKTSQALQHGLIPANLHFKTLNPKIEPFYTNLQVPTETQPWPALPNSWTRRASVNSFGFGGTNAHAILEAWNSKGHESDSHSKSVGGLFVLSANSAQSLASRASQLCHYLESNPETDLRRLSYTLFQRANFSFRAAFSATSVQQLTEKLKTAVLNKTSRTASIPENMPPRILGVFTGQGAQWATMGAKLYESSIVFRSAFSRMQDSLDELSVKDGRPSWSLIEELRAPPATSHIGEAAVSQPICTAVQVALVDMLSAAGVQFSGVVGHSSGEIAAAYTAGYLNAHDAIRIAYFRGLHSKKAQGPDGCSGKMMAVGMSIDQAAGFCAESRGTIKIAASNSARSCTLAGDASAIDSAKEKLDAAGTFARVLQVDTAYHSHHMQPVAQPYLDSLQKCSIKINTKPGTNVVWYSSVWGSNGRSRSFSGKDAESLKGQYWVDNMTNTVLFSQAVQRAVNESHVFDFALEVGPHPALKGPATETINNMTGIGLPYSGVLKRGQHDVESFFDALGLLWKTFPLQSGRSIVSFDGIERAFAPGGKNNRLGLLKDLPSYPFDHDSVYWKESRHSAIVRTQNQKRHQLLGSASTFGSGKQREVHWKQVLRLEEIPWLFGHTIQGEYLFPATCYVTMAYEAAIRLVSPAQEIRLVELHDIDVFRALSLKADSPGTEILFAVRITSQLDGVITASWSCYSNPVDFEHGQNLGDMPAQAESHVEGFLRIELGAPRDDILPARSEPILPLIPLDVEELYDTLAVLGHGYKEHFQTPKMLRRLHHAVVSMPAGWHEANSLTRSDVNPAALDTGIHGLLAGYSCPGDRRQRSAYLPSRIDSIRISMVAVPAVDGDGPTELLADSFVTHGDASRISGDINVFNPENNKTHVQIRGVHLLNLPGSLRSSRETYHQDIWERDALCGIEPDRKSIISNNRAQISNLAMRLVLFYCQKVLKELKPFEIMLMGKARKNFLTWVQKVLIPSVRAGEHEANKEWLDDSEAELNQEVERLKLANSADVVLLERLGRNLTSITRGLTAGVKVAEQENALQRFYADSFGFRETTADAAALVSQICHRYPAMKMIEVGAGFGSGLRDALINAAGKRRYTSYTVTNTVEPSDDDSKLIFKLLDIDKDPVQQGFVEASYDLVIATTSYSTKVSQETVINARKLLRPGGFLLLVALTNDYLPVRFVQSLLPRTWLEKDDSRPQIITVSDCDALLKVNGFSGVDVTYTQHFCSVMLSQAVDDVVLAVRDPITVTQKIDAEILLVLDPSPSTIVENLASQLEDRLASFATVRKVSGLENINVAPEAIILNLCDLDTPVFQEMSELRFKGLQEIMRQASVLLWITEGARGGAKPANTMVLGWGRSARLERSTMKLQILDIEQESQTVDPDVICKLLLNLSSSSSDDQDILFTLEPELMLRGNAIYIPRIWPVDGLNELADTRYKDVYVETSATNPFAALDERGILAIERPYGHTPASDLEVLASSVHGFRFQGEENIRQLCISRNVAGESSLTLSDEDSLEILWQYENGNGGIGYPHQLQFLITSAIAEATLRSLSGHVWIHGAPSWLQKGLDLAASRRDDIQLFNTTSDREIVTGNTNFLHPFATERDLVLVKPKDIAAFVCLEDSQQDHNLVGLVRSIWPSIRIELPVLSLNSFDGVVFNGLSKPMFVDLVKWHLSSGTLVSENLAEGAVIPVEHISKKSPSSILPTSVLDRTTTTTITAKLLPPDHDGIFSSKKTYLLLGLAGDFGISIALWMFDSGARHVVLASRNPVVLQPVVDHVAATHGATLRFMAIDICDEGSLSAAWAEIHTSMPPVGGIMNGAMLMRDQLFADQPWSDFSAVMGPKVRGTQNLVALLDREVAPEQLDFVVFFSSAVAVAGNGGQTAYGSSNWFMQGTASNMRQRGYPGCVVHIGGVSGLGYVQRHEKRKMLEDSLYWLMSPVSETDLHDMLAEVIAGDRHDLITGIRGDIRTYTWREQPRLWHYLQSEDDSNDETAKEGSSASLKIQLASSVADPDACLDLLLGGFTSALCGMLHMKPEELDTNVPVASIGIDSLVAVRVREWFMQQVGVEVSVLKVMSLNTPLLALCKDVLAIWRKQVKA.

The 423-residue stretch at 12-434 (NEPIAIVGSS…GTNAHAILEA (423 aa)) folds into the Ketosynthase family 3 (KS3) domain. Catalysis depends on for beta-ketoacyl synthase activity residues C174, H313, and H354. Residues 538–846 (VFTGQGAQWA…GPATETINNM (309 aa)) form the Malonyl-CoA:ACP transacylase (MAT) domain. Residues 940–1085 (HQLLGSASTF…GFLRIELGAP (146 aa)) are N-terminal hotdog fold. Residues 940 to 1254 (HQLLGSASTF…LLNLPGSLRS (315 aa)) enclose the PKS/mFAS DH domain. The active-site Proton acceptor; for dehydratase activity is the H974. A C-terminal hotdog fold region spans residues 1100 to 1254 (LIPLDVEELY…LLNLPGSLRS (155 aa)). The Proton donor; for dehydratase activity role is filled by D1160. A methyltransfrase (MT) domain region spans residues 1294 to 1590 (LVLFYCQKVL…QHFCSVMLSQ (297 aa)). The 179-residue stretch at 2088–2266 (TYLLLGLAGD…PGCVVHIGGV (179 aa)) folds into the Ketoreductase (KR) domain. The Carrier domain maps to 2366–2451 (DACLDLLLGG…LAIWRKQVKA (86 aa)). At S2404 the chain carries O-(pantetheine 4'-phosphoryl)serine.

Requires pantetheine 4'-phosphate as cofactor.

The protein operates within secondary metabolite biosynthesis. Reducing polyketide synthase; part of the gene cluster that mediates the biosynthesis of fusamarins, isocoumarin derivatives that show moderate cytotoxicity with IC(50) values between 1 and 50 uM. The polyketide synthase FMN1 probably synthesizes two different polyketides, a tetra- and a pentaketide, containinga varying number of double bonds depending on the selective actions of the trans-enoyl reductase FMN2. Chain fusion will presumably be mediated by the KS domain before finally offloading is catalyzed by the alpha/beta hydrolase fold enzyme FMN3. The protein is Reducing polyketide synthase 8 of Fusarium mangiferae (Mango malformation disease fungus).